The following is a 475-amino-acid chain: Ribulose bisphosphate carboxylase large chain (475 aa).

Positions M1–S2 are excised as a propeptide. P3 is subject to N-acetylproline. The residue at position 14 (K14) is an N6,N6,N6-trimethyllysine. Positions 123 and 173 each coordinate substrate. K175 serves as the catalytic Proton acceptor. Position 177 (K177) interacts with substrate. Mg(2+) is bound by residues K201, D203, and E204. K201 carries the N6-carboxylysine modification. H294 (proton acceptor) is an active-site residue. Positions 295, 327, and 379 each coordinate substrate.

It belongs to the RuBisCO large chain family. Type I subfamily. As to quaternary structure, heterohexadecamer of 8 large chains and 8 small chains; disulfide-linked. The disulfide link is formed within the large subunit homodimers. It depends on Mg(2+) as a cofactor. Post-translationally, the disulfide bond which can form in the large chain dimeric partners within the hexadecamer appears to be associated with oxidative stress and protein turnover.

The protein resides in the plastid. The protein localises to the chloroplast. The catalysed reaction is 2 (2R)-3-phosphoglycerate + 2 H(+) = D-ribulose 1,5-bisphosphate + CO2 + H2O. The enzyme catalyses D-ribulose 1,5-bisphosphate + O2 = 2-phosphoglycolate + (2R)-3-phosphoglycerate + 2 H(+). Its function is as follows. RuBisCO catalyzes two reactions: the carboxylation of D-ribulose 1,5-bisphosphate, the primary event in carbon dioxide fixation, as well as the oxidative fragmentation of the pentose substrate in the photorespiration process. Both reactions occur simultaneously and in competition at the same active site. This Viscum album (European mistletoe) protein is Ribulose bisphosphate carboxylase large chain.